Consider the following 350-residue polypeptide: Methionine import ATP-binding protein MetN (350 aa).

An ABC transporter domain is found at 2–241 (IQIKNLKKEY…PQAPVTRSFV (240 aa)). 38 to 45 (GHSGAGKS) lines the ATP pocket.

The protein belongs to the ABC transporter superfamily. Methionine importer (TC 3.A.1.24) family. The complex is composed of two ATP-binding proteins (MetN), two transmembrane proteins (MetI) and a solute-binding protein (MetQ).

It localises to the cell inner membrane. The catalysed reaction is L-methionine(out) + ATP + H2O = L-methionine(in) + ADP + phosphate + H(+). It carries out the reaction D-methionine(out) + ATP + H2O = D-methionine(in) + ADP + phosphate + H(+). Part of the ABC transporter complex MetNIQ involved in methionine import. Responsible for energy coupling to the transport system. This is Methionine import ATP-binding protein MetN from Francisella tularensis subsp. tularensis (strain FSC 198).